A 945-amino-acid chain; its full sequence is UvrABC system protein A (945 aa).

31–38 (GLSGSGKS) provides a ligand contact to ATP. Residues 254 to 281 (CPVCGHSISELEPKLFSFNNPAGACPTC) form a C4-type zinc finger. ABC transporter domains follow at residues 310 to 587 (WDRR…PDSL) and 607 to 937 (RDKK…HFLK). 640–647 (GVSGSGKS) contributes to the ATP binding site. A C4-type zinc finger spans residues 740 to 766 (CEACQGDGVIKVEMHFLPDIYVPCDVC).

It belongs to the ABC transporter superfamily. UvrA family. As to quaternary structure, forms a heterotetramer with UvrB during the search for lesions.

The protein resides in the cytoplasm. Functionally, the UvrABC repair system catalyzes the recognition and processing of DNA lesions. UvrA is an ATPase and a DNA-binding protein. A damage recognition complex composed of 2 UvrA and 2 UvrB subunits scans DNA for abnormalities. When the presence of a lesion has been verified by UvrB, the UvrA molecules dissociate. This is UvrABC system protein A from Pseudomonas aeruginosa (strain ATCC 15692 / DSM 22644 / CIP 104116 / JCM 14847 / LMG 12228 / 1C / PRS 101 / PAO1).